The following is a 119-amino-acid chain: ATP-dependent Clp protease adapter protein ClpS (119 aa).

Belongs to the ClpS family. In terms of assembly, binds to the N-terminal domain of the chaperone ClpA.

In terms of biological role, involved in the modulation of the specificity of the ClpAP-mediated ATP-dependent protein degradation. This Marinobacter nauticus (strain ATCC 700491 / DSM 11845 / VT8) (Marinobacter aquaeolei) protein is ATP-dependent Clp protease adapter protein ClpS.